An 845-amino-acid polypeptide reads, in one-letter code: Protein P (845 aa).

Residues 1-179 (MPLSYQHFRK…FCGSPYSWEQ (179 aa)) are terminal protein domain (TP). Positions 180-348 (ELHHGRSVTK…YCLSHLVNLL (169 aa)) are spacer. Disordered regions lie at residues 186–205 (SVTK…QPSG), 222–245 (QPRL…SGSI), and 288–318 (YSHL…RSQS). Positions 289-301 (SHLSTSKRQSSSG) are enriched in polar residues. Residues 349 to 692 (EDWGPCADHG…YMNLYPVARQ (344 aa)) are polymerase/reverse transcriptase domain (RT). In terms of domain architecture, Reverse transcriptase spans 359 to 602 (EHHIRIPRTP…YSLNFMGYII (244 aa)). Mg(2+) contacts are provided by D431, D553, and D554.

It belongs to the hepadnaviridae P protein family.

The enzyme catalyses DNA(n) + a 2'-deoxyribonucleoside 5'-triphosphate = DNA(n+1) + diphosphate. It catalyses the reaction Endonucleolytic cleavage to 5'-phosphomonoester.. Its activity is regulated as follows. Activated by host HSP70 and HSP40 in vitro to be able to bind the epsilon loop of the pgRNA. Because deletion of the RNase H region renders the protein partly chaperone-independent, the chaperones may be needed indirectly to relieve occlusion of the RNA-binding site by this domain. Inhibited by several reverse-transcriptase inhibitors: Lamivudine, Adefovir and Entecavir. Functionally, multifunctional enzyme that converts the viral RNA genome into dsDNA in viral cytoplasmic capsids. This enzyme displays a DNA polymerase activity that can copy either DNA or RNA templates, and a ribonuclease H (RNase H) activity that cleaves the RNA strand of RNA-DNA heteroduplexes in a partially processive 3'- to 5'-endonucleasic mode. Neo-synthesized pregenomic RNA (pgRNA) are encapsidated together with the P protein, and reverse-transcribed inside the nucleocapsid. Initiation of reverse-transcription occurs first by binding the epsilon loop on the pgRNA genome, and is initiated by protein priming, thereby the 5'-end of (-)DNA is covalently linked to P protein. Partial (+)DNA is synthesized from the (-)DNA template and generates the relaxed circular DNA (RC-DNA) genome. After budding and infection, the RC-DNA migrates in the nucleus, and is converted into a plasmid-like covalently closed circular DNA (cccDNA). The activity of P protein does not seem to be necessary for cccDNA generation, and is presumably released from (+)DNA by host nuclear DNA repair machinery. The protein is Protein P of Hepatitis B virus genotype A3 (isolate Cameroon/CMR711/1994) (HBV-A).